Reading from the N-terminus, the 361-residue chain is S-adenosylmethionine:tRNA ribosyltransferase-isomerase (361 aa).

It belongs to the QueA family. In terms of assembly, monomer.

The protein resides in the cytoplasm. The catalysed reaction is 7-aminomethyl-7-carbaguanosine(34) in tRNA + S-adenosyl-L-methionine = epoxyqueuosine(34) in tRNA + adenine + L-methionine + 2 H(+). Its pathway is tRNA modification; tRNA-queuosine biosynthesis. Its function is as follows. Transfers and isomerizes the ribose moiety from AdoMet to the 7-aminomethyl group of 7-deazaguanine (preQ1-tRNA) to give epoxyqueuosine (oQ-tRNA). The chain is S-adenosylmethionine:tRNA ribosyltransferase-isomerase from Haemophilus ducreyi (strain 35000HP / ATCC 700724).